Consider the following 261-residue polypeptide: Phosphatidylglycerol--prolipoprotein diacylglyceryl transferase (261 aa).

4 consecutive transmembrane segments (helical) span residues F17 to G37, L59 to Y79, I94 to W114, and T121 to G141. Residue R142 coordinates a 1,2-diacyl-sn-glycero-3-phospho-(1'-sn-glycerol). Helical transmembrane passes span P174 to Y194 and F228 to I248.

It belongs to the Lgt family.

It localises to the cell inner membrane. It carries out the reaction L-cysteinyl-[prolipoprotein] + a 1,2-diacyl-sn-glycero-3-phospho-(1'-sn-glycerol) = an S-1,2-diacyl-sn-glyceryl-L-cysteinyl-[prolipoprotein] + sn-glycerol 1-phosphate + H(+). It functions in the pathway protein modification; lipoprotein biosynthesis (diacylglyceryl transfer). Catalyzes the transfer of the diacylglyceryl group from phosphatidylglycerol to the sulfhydryl group of the N-terminal cysteine of a prolipoprotein, the first step in the formation of mature lipoproteins. The polypeptide is Phosphatidylglycerol--prolipoprotein diacylglyceryl transferase (Polynucleobacter asymbioticus (strain DSM 18221 / CIP 109841 / QLW-P1DMWA-1) (Polynucleobacter necessarius subsp. asymbioticus)).